The primary structure comprises 265 residues: Tryptophan synthase alpha chain (265 aa).

Active-site proton acceptor residues include glutamate 50 and aspartate 61.

It belongs to the TrpA family. In terms of assembly, tetramer of two alpha and two beta chains.

It catalyses the reaction (1S,2R)-1-C-(indol-3-yl)glycerol 3-phosphate + L-serine = D-glyceraldehyde 3-phosphate + L-tryptophan + H2O. It participates in amino-acid biosynthesis; L-tryptophan biosynthesis; L-tryptophan from chorismate: step 5/5. Its function is as follows. The alpha subunit is responsible for the aldol cleavage of indoleglycerol phosphate to indole and glyceraldehyde 3-phosphate. The protein is Tryptophan synthase alpha chain of Trichodesmium erythraeum (strain IMS101).